The primary structure comprises 360 residues: Phospho-N-acetylmuramoyl-pentapeptide-transferase (360 aa).

The next 10 membrane-spanning stretches (helical) occupy residues 21–41 (YLSFRAILSVLTALGLSLWMG), 73–93 (TMGGVMILAAISITILLWANL), 94–114 (SNPYVWAVLAVLMGYGAVGFV), 132–152 (WKYFWQSAIALVVAFALYAYG), 168–188 (VMPQLGLMYIVLTYFVIVGTS), 199–219 (GLAIMPTVLVAAGFAVIAWAT), 236–256 (ASELVVVCTAIVGAGLGFLWF), 263–283 (VFMGDVGSLALGGALGTIAVL), 288–308 (LVLVIMGGVFVMETLSVILQV), and 338–358 (VIVRFWIISMVLVLIGLATLK).

It belongs to the glycosyltransferase 4 family. MraY subfamily. Mg(2+) is required as a cofactor.

The protein resides in the cell inner membrane. It catalyses the reaction UDP-N-acetyl-alpha-D-muramoyl-L-alanyl-gamma-D-glutamyl-meso-2,6-diaminopimeloyl-D-alanyl-D-alanine + di-trans,octa-cis-undecaprenyl phosphate = di-trans,octa-cis-undecaprenyl diphospho-N-acetyl-alpha-D-muramoyl-L-alanyl-D-glutamyl-meso-2,6-diaminopimeloyl-D-alanyl-D-alanine + UMP. Its pathway is cell wall biogenesis; peptidoglycan biosynthesis. Catalyzes the initial step of the lipid cycle reactions in the biosynthesis of the cell wall peptidoglycan: transfers peptidoglycan precursor phospho-MurNAc-pentapeptide from UDP-MurNAc-pentapeptide onto the lipid carrier undecaprenyl phosphate, yielding undecaprenyl-pyrophosphoryl-MurNAc-pentapeptide, known as lipid I. This Vibrio vulnificus (strain YJ016) protein is Phospho-N-acetylmuramoyl-pentapeptide-transferase.